Reading from the N-terminus, the 357-residue chain is Prostaglandin D2 receptor (357 aa).

At 1 to 20 (MNESYRCQTSTWVERGSSAT) the chain is on the extracellular side. Residue Asn-2 is glycosylated (N-linked (GlcNAc...) asparagine). A helical membrane pass occupies residues 21 to 41 (MGAVLFGAGLLGNLLALVLLA). At 42–58 (RSGLGSCRPGPLHPPPS) the chain is on the cytoplasmic side. A helical transmembrane segment spans residues 59 to 79 (VFYVLVCGLTVTDLLGKCLIS). The Extracellular segment spans residues 80 to 106 (PMVLAAYAQNQSLKELLPASGNQLCET). The N-linked (GlcNAc...) asparagine glycan is linked to Asn-89. A disulfide bridge links Cys-104 with Cys-182. A helical membrane pass occupies residues 107 to 127 (FAFLMSFFGLASTLQLLAMAV). The Cytoplasmic portion of the chain corresponds to 128 to 149 (ECWLSLGHPFFYQRHVTLRRGV). Residues 150–170 (LVAPVVAAFCLAFCALPFAGF) form a helical membrane-spanning segment. Residues 171 to 194 (GKFVQYCPGTWCFIQMIHKERSFS) lie on the Extracellular side of the membrane. The helical transmembrane segment at 195–215 (VIGFSVLYSSLMALLVLATVV) threads the bilayer. The Cytoplasmic portion of the chain corresponds to 216 to 261 (CNLGAMYNLYDMHRRQRHYPHRCSRDRAQSGSDYRHGSLHPLEELD). Residues 262–282 (HFVLLALMTVLFTMCSLPLIY) traverse the membrane as a helical segment. The Extracellular segment spans residues 283 to 306 (RAYYGAFKLENKAEGDSEDLQALR). A helical membrane pass occupies residues 307–327 (FLSVISIVDPWIFIIFRTSVF). Residues 328 to 357 (RMLFHKVFTRPLIYRNWSSHSQQSNVESTL) lie on the Cytoplasmic side of the membrane.

Belongs to the G-protein coupled receptor 1 family. As to expression, most abundantly expressed in the ileum, followed by lung, stomach and uterus.

Its subcellular location is the cell membrane. In terms of biological role, receptor for prostaglandin D2 (PGD2). The activity of this receptor is mainly mediated by G(s) proteins that stimulate adenylate cyclase, resulting in an elevation of intracellular cAMP. A mobilization of calcium is also observed, but without formation of inositol 1,4,5-trisphosphate. Involved in PLA2G3-dependent maturation of mast cells. PLA2G3 is secreted by immature mast cells and acts on nearby fibroblasts upstream to PTDGS to synthesize PGD2, which in turn promotes mast cell maturation and degranulation via PTGDR. The sequence is that of Prostaglandin D2 receptor (Ptgdr) from Mus musculus (Mouse).